The sequence spans 77 residues: MIYKVFYQETKERSPRRETTRALYLDIDASSELEGRITARQLVEENRPEYNIEYIELLSDKLLDYEKETGAFEITEF.

It belongs to the RNA polymerase subunit epsilon family. As to quaternary structure, RNAP is composed of a core of 2 alpha, a beta and a beta' subunit. The core is associated with a delta subunit, and at least one of epsilon or omega. When a sigma factor is associated with the core the holoenzyme is formed, which can initiate transcription.

It carries out the reaction RNA(n) + a ribonucleoside 5'-triphosphate = RNA(n+1) + diphosphate. Its function is as follows. A non-essential component of RNA polymerase (RNAP). The chain is DNA-directed RNA polymerase subunit epsilon from Streptococcus pneumoniae serotype 19F (strain G54).